We begin with the raw amino-acid sequence, 60 residues long: Large ribosomal subunit protein bL32 (60 aa).

It belongs to the bacterial ribosomal protein bL32 family.

The polypeptide is Large ribosomal subunit protein bL32 (Fervidobacterium nodosum (strain ATCC 35602 / DSM 5306 / Rt17-B1)).